A 195-amino-acid polypeptide reads, in one-letter code: Inner membrane protein YohC (195 aa).

Residues 1-32 (MSHVWGLFSHPDREMQVINRENETISHHYTHH) are Cytoplasmic-facing. A helical transmembrane segment spans residues 33–55 (VLLMAAIPVICAFIGTTQIGWNF). Over 56–64 (GDGTILKLS) the chain is Periplasmic. A helical transmembrane segment spans residues 65 to 87 (WFTGLALAVLFYGVMLAGVAVMG). Residues 88 to 107 (RVIWWMARNYPQRPSLAHCM) are Cytoplasmic-facing. Residues 108–130 (VFAGYVATPLFLSGLVALYPLVW) traverse the membrane as a helical segment. Residues 131 to 134 (LCAL) are Periplasmic-facing. The helical transmembrane segment at 135 to 157 (VGTVALFYTGYLLYLGIPSFLNI) threads the bilayer. The Cytoplasmic segment spans residues 158–169 (NKEEGLSFSSST). Residues 170 to 192 (LAIGVLVLEVLLALTVILWGYGY) form a helical membrane-spanning segment. Over 193-195 (RLF) the chain is Periplasmic.

The protein localises to the cell inner membrane. In Escherichia coli O6:H1 (strain CFT073 / ATCC 700928 / UPEC), this protein is Inner membrane protein YohC (yohC).